The chain runs to 570 residues: Urease subunit alpha (570 aa).

The 440-residue stretch at 131–570 (GGMDSHIHFI…LPMAQRYFLF (440 aa)) folds into the Urease domain. His136, His138, and Lys219 together coordinate Ni(2+). Lys219 bears the N6-carboxylysine mark. His221 provides a ligand contact to substrate. The Ni(2+) site is built by His248 and His274. His322 acts as the Proton donor in catalysis. Asp362 contributes to the Ni(2+) binding site.

Belongs to the metallo-dependent hydrolases superfamily. Urease alpha subunit family. In terms of assembly, heterotrimer of UreA (gamma), UreB (beta) and UreC (alpha) subunits. Three heterotrimers associate to form the active enzyme. The cofactor is Ni cation. In terms of processing, carboxylation allows a single lysine to coordinate two nickel ions.

Its subcellular location is the cytoplasm. The catalysed reaction is urea + 2 H2O + H(+) = hydrogencarbonate + 2 NH4(+). The protein operates within nitrogen metabolism; urea degradation; CO(2) and NH(3) from urea (urease route): step 1/1. The protein is Urease subunit alpha of Rhizobium leguminosarum bv. trifolii (strain WSM2304).